We begin with the raw amino-acid sequence, 146 residues long: UPF0310 protein YdcG (146 aa).

The protein belongs to the UPF0310 family.

This chain is UPF0310 protein YdcG (ydcG), found in Bacillus subtilis (strain 168).